The sequence spans 2554 residues: Highly reducing polyketide synthase PKS6 (2554 aa).

The tract at residues 1-48 (MGSLSAVPATNGNHAALNGSASTNGQHVNGSTHVNGNHSLNGSAQVNG) is disordered. Over residues 8-48 (PATNGNHAALNGSASTNGQHVNGSTHVNGNHSLNGSAQVNG) the composition is skewed to polar residues. In terms of domain architecture, Ketosynthase family 3 (KS3) spans 56–481 (LEPIAVVGMS…GTNAHVVVDA (426 aa)). Residues C230, H367, and H407 each act as for beta-ketoacyl synthase activity in the active site. The segment at 595–913 (VFSGQGAQYP…HYTGSLKRGE (319 aa)) is malonyl-CoA:ACP transacylase (MAT) domain. The interval 981-1119 (HELLGTLVHD…GLVQVILKSE (139 aa)) is N-terminal hotdog fold. Residues 981–1281 (HELLGTLVHD…QAWGVVATKL (301 aa)) form a dehydratase (DH) domain region. The region spanning 981–1287 (HELLGTLVHD…ATKLPDVSIG (307 aa)) is the PKS/mFAS DH domain. H1013 acts as the Proton acceptor; for dehydratase activity in catalysis. A C-terminal hotdog fold region spans residues 1137–1287 (AQHIPANQFY…ATKLPDVSIG (151 aa)). The active-site Proton donor; for dehydratase activity is D1200. The segment at 1451–1556 (VEVGAGTGSA…KTMLRPGGKL (106 aa)) is methyltransferase (CMet) domain. The interval 1840–2153 (GVLDTIRWVD…AGKHTGKVIL (314 aa)) is enoyl reductase (ER) domain. A ketoreductase (KR) domain region spans residues 2177–2353 (ATYLVVGGLG…TAYAVNIGAI (177 aa)). Residues 2457-2534 (EAQDIICDAI…ELAEIVTKGS (78 aa)) enclose the Carrier domain. The residue at position 2494 (S2494) is an O-(pantetheine 4'-phosphoryl)serine.

Its pathway is secondary metabolite biosynthesis. Functionally, highly reducing polyketide synthase; part of the gene cluster that mediates the biosynthesis of the lipopeptide fusaristatin A. Fusaristatin A consists of a polyketide chain linked to three amino acid residues glutamine (Gln), dehydroalanine (dehydro-Ala), and beta-aminoisobutyric acid. The biosynthesis starts with formation of a linear polyketide chain by the highly reducing polyketide synthase PKS6. The gene cluster does not contain an acyl-CoA ligase or an acyl-transferase, and it is therefore predicted that the polyketide is transferred directly to the nonribosomal peptide synthetase NRPS7. Modules 1-3 from NRPS7 incorporate dehydro-Ala, Gln, and beta-aminoisobutyric acid in the compound, which is released by cyclization. The beta-aminoisobutyric acid units are most likely not freely available to the NRPS, but can be synthesized from thymine, which requires a dehydrogenase, a monooxygenase, and an aminotransferase. The fusaristatin A cluster contains a cytochrome P450 monooxygenase (FGSG_08207) and an aminotransferase (FGSG_17085), which theoretically can perform two of the enzymatic steps. The enzymes may however also be involved in biosynthesis of dehydroalanine or modification of the polyketide. The dehydro-Ala residue can be a result of cyclization, where serine is dehydrated. The last gene of the cluster encodes a protein with an A/B barrel domain found in variable enzymes, which hampers functional prediction. In Gibberella zeae (strain ATCC MYA-4620 / CBS 123657 / FGSC 9075 / NRRL 31084 / PH-1) (Wheat head blight fungus), this protein is Highly reducing polyketide synthase PKS6.